Reading from the N-terminus, the 154-residue chain is Cathelicidin-2 (154 aa).

The first 17 residues, 1 to 17 (MLSCWVLLLALLGGVCA), serve as a signal peptide directing secretion. Positions 18 to 122 (LPAPLSYPQA…RCRDASSDPV (105 aa)) are excised as a propeptide. Disulfide bonds link Cys75/Cys86 and Cys97/Cys114.

This sequence belongs to the cathelicidin family. In terms of tissue distribution, detected in trachea, lung, proventriculus, duodenum, jejunum, ileum, caeca, colon, caecal tonsil, bursa of Fabricius, kidney, ovary, testis, thymus, liver, spleen, bone marrow, skin, uropygial gland, muscle and brain.

Its subcellular location is the secreted. Functionally, binds bacterial lipopolysaccharide (LPS). Has potent antimicrobial activity against Gram-positive and Gram-negative bacteria (in vitro). Has hemolytic activity (in vitro). May play a role in the innate immune response. In Gallus gallus (Chicken), this protein is Cathelicidin-2 (CATHL2).